Reading from the N-terminus, the 127-residue chain is Evasin-4 (127 aa).

A signal peptide spans 1–23; the sequence is MAFKYWFVFAAVLYARQWLSTKC. 4 disulfide bridges follow: cysteine 50–cysteine 69, cysteine 65–cysteine 112, cysteine 86–cysteine 117, and cysteine 107–cysteine 126. Residues asparagine 54, asparagine 64, asparagine 70, asparagine 77, asparagine 83, asparagine 106, and asparagine 114 are each glycosylated (N-linked (GlcNAc...) asparagine).

Belongs to the evasin C8 family. Monomer.

It localises to the secreted. Its function is as follows. Salivary chemokine-binding protein which has chemokine-neutralizing activity and binds to host chemokines CCL1, CCL3, CCL5, CCL7, CCL8, CCL11, CCL14, CCL15, CCL16, CCL17, CCL18, CCL19, CCL21, CCL22, CCL23, CCL24, CCL25 and CCL26 with nanomolar affinity. Binds to CCL3 and CCL5 with 1:1 stoichiometry. Although binding to CCL25 is observed, does not inhibit CCL25-induced chemotaxis. Has been shown to reduce cardiac injury and inflammation in mice through its anti-CCL5 activity. This chain is Evasin-4, found in Rhipicephalus sanguineus (Brown dog tick).